We begin with the raw amino-acid sequence, 92 residues long: Putative membrane protein insertion efficiency factor (92 aa).

The protein belongs to the UPF0161 family.

Its subcellular location is the cell inner membrane. Functionally, could be involved in insertion of integral membrane proteins into the membrane. This Synechococcus sp. (strain CC9605) protein is Putative membrane protein insertion efficiency factor.